Reading from the N-terminus, the 520-residue chain is 1,4-alpha-glucan branching enzyme TTHA1902 (520 aa).

The Nucleophile role is filled by glutamate 184. Substrate-binding residues include arginine 265 and glycine 282. Aspartate 353 acts as the Proton donor in catalysis. 3 residues coordinate substrate: tryptophan 404, aspartate 460, and glutamine 469.

Belongs to the glycosyl hydrolase 57 family.

The catalysed reaction is Transfers a segment of a (1-&gt;4)-alpha-D-glucan chain to a primary hydroxy group in a similar glucan chain.. Its pathway is glycan biosynthesis; glycogen biosynthesis. In terms of biological role, catalyzes the formation of branch points in alpha-glucans by cleavage of an alpha-1,4 glycosidic bond and subsequent transfer of the cleaved-off oligosaccharide to a new alpha-1,6 position. The branch chain-length distribution of the reaction products shows degree of polymerization (DP) of 3 to 13, with two local maxima at DP 7 and DP 11. Exhibits an alpha-retaining catalytic mechanism. Is involved in glycogen biosynthesis. Shows a secondary activity, i.e. the hydrolysis of the substrate, being 4% of the total activity. Can use amylose as substrate but not alpha-1,4-linked oligosaccharides of 2-7 glucose residues, beta-cyclodextrin, 6-O-glucosyl-beta-cyclodextrin and 6-O-maltosyl-beta-cyclodextrin. Is not able to branch amylopectin further, it only hydrolyzes amylopectin. Thus, displays preference for linear and long substrates (amylose) over branched structures (amylopectin). This is 1,4-alpha-glucan branching enzyme TTHA1902 from Thermus thermophilus (strain ATCC 27634 / DSM 579 / HB8).